The primary structure comprises 116 residues: Large ribosomal subunit protein uL18 (116 aa).

The protein belongs to the universal ribosomal protein uL18 family. In terms of assembly, part of the 50S ribosomal subunit; part of the 5S rRNA/L5/L18/L25 subcomplex. Contacts the 5S and 23S rRNAs.

Functionally, this is one of the proteins that bind and probably mediate the attachment of the 5S RNA into the large ribosomal subunit, where it forms part of the central protuberance. The polypeptide is Large ribosomal subunit protein uL18 (Shewanella sp. (strain ANA-3)).